A 394-amino-acid chain; its full sequence is Ornithine aminotransferase 1 (394 aa).

N6-(pyridoxal phosphate)lysine is present on lysine 252.

The protein belongs to the class-III pyridoxal-phosphate-dependent aminotransferase family. OAT subfamily. Pyridoxal 5'-phosphate serves as cofactor.

The protein resides in the cytoplasm. The catalysed reaction is a 2-oxocarboxylate + L-ornithine = L-glutamate 5-semialdehyde + an L-alpha-amino acid. It functions in the pathway amino-acid biosynthesis; L-proline biosynthesis; L-glutamate 5-semialdehyde from L-ornithine: step 1/1. Catalyzes the interconversion of ornithine to glutamate semialdehyde. The protein is Ornithine aminotransferase 1 of Staphylococcus saprophyticus subsp. saprophyticus (strain ATCC 15305 / DSM 20229 / NCIMB 8711 / NCTC 7292 / S-41).